A 100-amino-acid polypeptide reads, in one-letter code: Small ribosomal subunit protein uS14c (100 aa).

It belongs to the universal ribosomal protein uS14 family. Part of the 30S ribosomal subunit.

Its subcellular location is the plastid. Binds 16S rRNA, required for the assembly of 30S particles. In Epifagus virginiana (Beechdrops), this protein is Small ribosomal subunit protein uS14c.